Reading from the N-terminus, the 179-residue chain is ATP-dependent protease subunit HslV (179 aa).

T5 is an active-site residue. 3 residues coordinate Na(+): G164, C167, and T170.

Belongs to the peptidase T1B family. HslV subfamily. As to quaternary structure, a double ring-shaped homohexamer of HslV is capped on each side by a ring-shaped HslU homohexamer. The assembly of the HslU/HslV complex is dependent on binding of ATP.

The protein localises to the cytoplasm. It catalyses the reaction ATP-dependent cleavage of peptide bonds with broad specificity.. Its activity is regulated as follows. Allosterically activated by HslU binding. In terms of biological role, protease subunit of a proteasome-like degradation complex believed to be a general protein degrading machinery. The polypeptide is ATP-dependent protease subunit HslV (Verminephrobacter eiseniae (strain EF01-2)).